Here is a 509-residue protein sequence, read N- to C-terminus: MPIRLHIFVNSARHAINSSAFICRFIAYHLSPLLIHLSYFLIIDILGFVSLVVLRPSNHKYNPRYVDMFFLSTSAVTVIGLATIQMEDLSSSQIAILTLLMFLDSKMFLSFLGLVLESSKQNKHDPENRRVSSVTVCKQSQLEEATPQTPSMNSIDIKKRCLKYLVFVVLAYMIIILVTGSLLVFMYIAHVSSARDVLTRKSINKALFSISVTVSSFTNGGLLPTNESMVVFSSNNGLLLLLIGQILAGSTLFPVFLRLVIWALRGLRLAKAEEPDFMMNNSSAVGFSHLLPNLQTIFLAVVEVAFVAMTVILFCCLNWDSVVFAGLSSLQKITNALFMAVNARQAGENSIDCSLVAPAALVLFMVMMYTPSLTKLFSACQDHKRIGPESDDRTSKGKPFLKMMAFSPLGFNTTVIMLVCITERRSLSTDPLNLSTFNIIFEVISAYGNIGLSTGYSCSRQLQHQEGIACHEKAYNFSGWWSEPGKLILVLAMLCGRLNSKDSTSARTR.

The Cytoplasmic segment spans residues 1–32 (MPIRLHIFVNSARHAINSSAFICRFIAYHLSP). Helical transmembrane passes span 33-53 (LLIH…SLVV) and 96-116 (ILTL…GLVL). The Cytoplasmic segment spans residues 117–164 (ESSKQNKHDPENRRVSSVTVCKQSQLEEATPQTPSMNSIDIKKRCLKY). 2 helical membrane-spanning segments follow: residues 165–185 (LVFV…LLVF) and 237–257 (GLLL…PVFL). Over 258-296 (RLVIWALRGLRLAKAEEPDFMMNNSSAVGFSHLLPNLQT) the chain is Cytoplasmic. 2 consecutive transmembrane segments (helical) span residues 297-317 (IFLA…FCCL) and 353-373 (CSLV…TPSL). Topologically, residues 374–400 (TKLFSACQDHKRIGPESDDRTSKGKPF) are cytoplasmic. Helical transmembrane passes span 401–421 (LKMM…LVCI) and 474–494 (AYNF…LAML). The Cytoplasmic portion of the chain corresponds to 495–509 (CGRLNSKDSTSARTR).

Belongs to the TrkH potassium transport family. HKT (TC 2.A.38.3) subfamily.

The protein localises to the membrane. Functionally, probable cation transporter. May be involved in regulation of potassium-sodium homeostasis. In Oryza sativa subsp. japonica (Rice), this protein is Probable cation transporter HKT2;3.